A 3189-amino-acid chain; its full sequence is Beauvericin nonribosomal cyclodepsipeptide synthetase (3189 aa).

Residues 73-466 (HAMYEISQHV…EQLQSAADDA (394 aa)) are condensation 1. Residues 202–223 (DSLPLTPDSSGGSDSDSPSTLK) form a disordered region. The span at 208–220 (PDSSGGSDSDSPS) shows a compositional bias: low complexity. The segment at 507–901 (AESPSDPAVL…GRIDSQVKIR (395 aa)) is adenylation 1. Residues 1036–1112 (TLETGPEARL…RLQAVMSGDS (77 aa)) enclose the Carrier 1 domain. O-(pantetheine 4'-phosphoryl)serine is present on S1073. Residues 1136–1569 (SYSQGRLWFL…KSLISVLPLT (434 aa)) are condensation 2. The segment at 1599–2004 (FRSQVATCPD…GRMDFQFKIR (406 aa)) is adenylation 2. Residues 2072–2211 (MYNGIDAISP…FPTVEYLTRV (140 aa)) are S-adenosyl-L-methionine-dependent N-methyltransferase. Carrier domains follow at residues 2557–2631 (CPIS…REGL) and 2654–2728 (APRN…ELGQ). O-(pantetheine 4'-phosphoryl)serine occurs at positions 2591 and 2688. Residues 2773–3181 (QDVYPATHMQ…AYLMEEVCRL (409 aa)) are condensation 3.

The protein belongs to the NRP synthetase family.

The catalysed reaction is 3 (R)-2-hydroxy-3-methylbutanoate + 3 L-phenylalanine + 3 S-adenosyl-L-methionine + 6 ATP = beauvericin + 6 AMP + 3 S-adenosyl-L-homocysteine + 6 diphosphate + 6 H(+). Its function is as follows. Beauvericin nonribosomal cyclodepsipeptide synthetase; part of the gene cluster that mediates the biosynthesis of beauvericin (BEA), a non-ribosomal cyclic hexadepsipeptide that shows antibiotic, antifungal, insecticidal, and cancer cell antiproliferative and antihaptotactic activity. Ketoisovalerate reductase BEA2 catalyzes the NADPH-specific reduction of ketoisovaleric acid to hydroxyisovalerate, a precursor for beauvericin biosynthesis. The nonribosomal cyclodepsipeptide synthetase BEA1 then catalyzes the formation of beauvericin via condensation and cyclization of 3 dipeptidol monomers, each composed of one unit of hydroxyisovalerate and one unit of N-methyl-phenylalanine. The chain is Beauvericin nonribosomal cyclodepsipeptide synthetase (Beas) from Beauveria bassiana (White muscardine disease fungus).